The primary structure comprises 379 residues: MKHLALIGSTGSIGRQVLQVVRSIPDTFIIETLAAYGRNQEALISQIREFNPRVVAVREETTYKELRKLFPHIEILLGEEGLVSVATEPSVTMTIVASSGIDALPAVIAAIRQKKTIALANKESLVAAGELVTTLARENGVQILPIDSEHNALFQCLEGRDSSTIKKLLLTASGGPLRNKSKEELQKVSLQEVLRHPVWNMGPKITVDSSTLVNKGLEIIEAFWLFGLEAVEIEAVIHPQSLVHGMVEFCDGTILSVMNPPSMLFPIQHVLTFPERSPAIGPGFDFLSNRTLEFFPIDEDRFPSVHLAKRVLLEKGSMGCFFNGANEALVHRFLAGEISWHQIVPKLQALVDQHRVQSCLSLEEILSVDAEARARAQEC.

The NADPH site is built by T10, G11, S12, I13, R38, N39, and N121. A 1-deoxy-D-xylulose 5-phosphate-binding site is contributed by K122. E123 serves as a coordination point for NADPH. Mn(2+) is bound at residue D147. S148, E149, S173, and H196 together coordinate 1-deoxy-D-xylulose 5-phosphate. E149 lines the Mn(2+) pocket. Residue G202 coordinates NADPH. 4 residues coordinate 1-deoxy-D-xylulose 5-phosphate: S209, N214, K215, and E218. Residue E218 participates in Mn(2+) binding.

The protein belongs to the DXR family. The cofactor is Mg(2+). It depends on Mn(2+) as a cofactor.

The enzyme catalyses 2-C-methyl-D-erythritol 4-phosphate + NADP(+) = 1-deoxy-D-xylulose 5-phosphate + NADPH + H(+). The protein operates within isoprenoid biosynthesis; isopentenyl diphosphate biosynthesis via DXP pathway; isopentenyl diphosphate from 1-deoxy-D-xylulose 5-phosphate: step 1/6. Catalyzes the NADPH-dependent rearrangement and reduction of 1-deoxy-D-xylulose-5-phosphate (DXP) to 2-C-methyl-D-erythritol 4-phosphate (MEP). The chain is 1-deoxy-D-xylulose 5-phosphate reductoisomerase from Chlamydia trachomatis serovar A (strain ATCC VR-571B / DSM 19440 / HAR-13).